Consider the following 419-residue polypeptide: Putative zinc metalloprotease SP_0263 (419 aa).

Residue H18 participates in Zn(2+) binding. E19 is an active-site residue. H22 lines the Zn(2+) pocket. A run of 3 helical transmembrane segments spans residues 169–191 (LITN…WVLI), 345–367 (ILYF…IPAL), and 388–410 (EIET…AVTW).

The protein belongs to the peptidase M50B family. It depends on Zn(2+) as a cofactor.

It is found in the cell membrane. This chain is Putative zinc metalloprotease SP_0263, found in Streptococcus pneumoniae serotype 4 (strain ATCC BAA-334 / TIGR4).